The following is a 177-amino-acid chain: ATP-dependent protease subunit HslV (177 aa).

The active site involves T2. Residues A159, D162, and T165 each coordinate Na(+).

The protein belongs to the peptidase T1B family. HslV subfamily. A double ring-shaped homohexamer of HslV is capped on each side by a ring-shaped HslU homohexamer. The assembly of the HslU/HslV complex is dependent on binding of ATP.

It localises to the cytoplasm. It catalyses the reaction ATP-dependent cleavage of peptide bonds with broad specificity.. With respect to regulation, allosterically activated by HslU binding. In terms of biological role, protease subunit of a proteasome-like degradation complex believed to be a general protein degrading machinery. In Lactobacillus leichmannii, this protein is ATP-dependent protease subunit HslV.